The following is a 317-amino-acid chain: Probable transcription factor At5g61620 (317 aa).

The CCHC-type zinc-finger motif lies at 12–25 (CSHCGHNGHNARTC). Residues 77-111 (DPIAAVDDTGYHSDGQIHSKKGKTAHEKKKGKPWT) form a disordered region. Residues 94 to 108 (HSKKGKTAHEKKKGK) show a composition bias toward basic residues. The HTH myb-type domain maps to 102–158 (HEKKKGKPWTEEEHRNFLIGLNKLGKGDWRGIAKSFVSTRTPTQVASHAQKYFIRLN). Residues 130-154 (WRGIAKSFVSTRTPTQVASHAQKYF) constitute a DNA-binding region (H-T-H motif). The disordered stretch occupies residues 173 to 206 (SLEDQKEKERNSQDASTKTPPKQPITGIQQPVVQ). The segment covering 175-184 (EDQKEKERNS) has biased composition (basic and acidic residues). Polar residues predominate over residues 185–206 (QDASTKTPPKQPITGIQQPVVQ).

The protein localises to the nucleus. Its function is as follows. Probable transcription factor involved in somatic embryogenesis. Acts as a positive regulator of BHLH109. This Arabidopsis thaliana (Mouse-ear cress) protein is Probable transcription factor At5g61620.